The following is a 461-amino-acid chain: tRNA (guanine(10)-N(2))-methyltransferase TRMT11 (461 aa).

Belongs to the class I-like SAM-binding methyltransferase superfamily. TRM11 methyltransferase family. Part of the heterodimeric TRMT11-TRM112 methyltransferase complex; this complex forms an active tRNA methyltransferase, where TRMT112 acts as an activator of the catalytic subunit TRMT11.

It localises to the cytoplasm. It catalyses the reaction guanosine(10) in tRNA + S-adenosyl-L-methionine = N(2)-methylguanosine(10) in tRNA + S-adenosyl-L-homocysteine + H(+). Functionally, catalytic subunit of the TRMT11-TRM112 methyltransferase complex, that specifically mediates the S-adenosyl-L-methionine-dependent N(2)-methylation of guanosine nucleotide at position 10 (m2G10) in tRNAs. This is one of the major tRNA (guanine-N(2))-methyltransferases. The chain is tRNA (guanine(10)-N(2))-methyltransferase TRMT11 from Gallus gallus (Chicken).